Here is a 128-residue protein sequence, read N- to C-terminus: Small ribosomal subunit protein uS9c (128 aa).

A disordered region spans residues 106–128 (SRIKERKKYGLKKARKAPQFSKR). The span at 109 to 128 (KERKKYGLKKARKAPQFSKR) shows a compositional bias: basic residues.

This sequence belongs to the universal ribosomal protein uS9 family.

It localises to the plastid. The protein localises to the chloroplast. In Cyanidium caldarium (Red alga), this protein is Small ribosomal subunit protein uS9c (rps9).